Here is a 2357-residue protein sequence, read N- to C-terminus: Protein transport protein Sec16A (2357 aa).

Disordered regions lie at residues 1–225 (MQPP…SYQH), 240–347 (QAAS…AHHP), 394–463 (SFSS…GTGT), 504–562 (YGPL…ARPQ), 579–630 (DTSG…TSAN), 666–689 (KRRA…DNME), 714–739 (TAGT…GPVK), 778–820 (SEVV…PPKV), 917–1008 (VTGA…QEEA), 1023–1055 (PVRM…LHNQ), and 1076–1151 (QPEL…AAVR). Polar residues-rich tracts occupy residues 57–75 (NRQT…SSLP) and 94–104 (TPTNAGDSSTG). The span at 208 to 221 (MPGQWGPAQGGPQP) shows a compositional bias: low complexity. Polar residues predominate over residues 281-290 (VHQQSKNHPL). Ser-311 bears the Phosphoserine mark. Positions 333–342 (PFTQGNSPEN) are enriched in polar residues. A compositionally biased stretch (low complexity) spans 540-561 (PDSVSSSYSSHSHRSPPGSARP). Ser-581, Ser-591, Ser-609, Ser-611, and Ser-614 each carry phosphoserine. The segment covering 581–590 (SGSFFKQIDS) has biased composition (polar residues). Thr-615 is subject to Phosphothreonine. Ser-617 carries the phosphoserine modification. 3 stretches are compositionally biased toward polar residues: residues 921–959 (SLPS…QTPQ), 972–997 (FVSS…PNSN), and 1029–1041 (PSPS…QQPL). The segment at 1037–1905 (SQQPLPNHPR…QHVERQIQEG (869 aa)) is required for localization to endoplasmic reticulum exit sites. Phosphoserine is present on Ser-1087. Residues 1118–1415 (ASPASVNTGQ…EAPHAPGSFH (298 aa)) are interaction with MIA3. The tract at residues 1119 to 1420 (SPASVNTGQL…PGSFHGDYAY (302 aa)) is required for endoplasmic reticulum localization. The segment covering 1134-1150 (QASSASVTSTNSSQAAV) has biased composition (low complexity). Ser-1223 carries the phosphoserine modification. The interval 1226 to 1253 (AENHRYSEPERPSSRASHYSDQLAPRQG) is disordered. A compositionally biased stretch (basic and acidic residues) spans 1227–1238 (ENHRYSEPERPS). Ser-1245 carries the phosphoserine modification. Thr-1340 is subject to Phosphothreonine. Ser-1342, Ser-1362, Ser-1365, Ser-1371, Ser-1374, Ser-1377, Ser-1384, Ser-1588, and Ser-1616 each carry phosphoserine. The segment at 1344–1395 (DDDAEIHRDPYGEEADRRSIHSEHSARSLRSTHSLPSRRSSLSSHSHQSQIY) is disordered. Basic and acidic residues predominate over residues 1348–1369 (EIHRDPYGEEADRRSIHSEHSA). A compositionally biased stretch (low complexity) spans 1371-1392 (SLRSTHSLPSRRSSLSSHSHQS). Positions 1449–1905 (QVPSRPTSPE…QHVERQIQEG (457 aa)) are central conserved domain (CCD); mediates interaction with RNF183, LRRK2 and SEC13. Residues 1907-1943 (VLWSQDGTEPQQCRITSGSEVEQSDGPGLNQQAGPQA) are disordered. Residues 1908–1927 (LWSQDGTEPQQCRITSGSEV) show a composition bias toward polar residues. Position 1922 is a phosphothreonine (Thr-1922). Phosphoserine occurs at positions 1951, 2043, 2063, 2077, and 2094. Disordered regions lie at residues 1993 to 2141 (ELSP…RTEA), 2156 to 2198 (KKNQ…PTAS), and 2240 to 2357 (PLPI…AALN). Residues 2092 to 2105 (GSSSLTRAPSLTSD) are compositionally biased toward polar residues. Residues 2106–2126 (SEGKKPAQAVKKEPKEPKKTE) are compositionally biased toward basic and acidic residues. The segment at 2126 to 2357 (ESWFSRWLPG…IGQRKYAALN (232 aa)) is required for interaction with SEC23A. The residue at position 2291 (Ser-2291) is a Phosphoserine. Residues 2332 to 2343 (QLVQASVTSGNS) show a composition bias toward polar residues.

It belongs to the SEC16 family. In terms of assembly, SEC16A and SEC16B are each present in multiple copies in a heteromeric complex. Interacts with SEC23A. Interacts with RNF183, RNF152, MIA3 and SEC13. Interacts with GORASP2 in response to ER stress. Interacts with LRRK2 (via ROC domain). Interacts with RAB10.

Its subcellular location is the endoplasmic reticulum membrane. The protein resides in the golgi apparatus membrane. It localises to the cytoplasm. The protein localises to the perinuclear region. It is found in the cytosol. Its subcellular location is the microsome membrane. In terms of biological role, acts as a molecular scaffold that plays a key role in the organization of the endoplasmic reticulum exit sites (ERES), also known as transitional endoplasmic reticulum (tER). SAR1A-GTP-dependent assembly of SEC16A on the ER membrane forms an organized scaffold defining an ERES. Required for secretory cargo traffic from the endoplasmic reticulum to the Golgi apparatus. Mediates the recruitment of MIA3/TANGO to ERES. Regulates both conventional (ER/Golgi-dependent) and GORASP2-mediated unconventional (ER/Golgi-independent) trafficking of CFTR to cell membrane. Acts as a RAB10 effector in the regulation of insulin-induced SLC2A4/GLUT4 glucose transporter-enriched vesicles delivery to the plasma membrane in adipocytes. The polypeptide is Protein transport protein Sec16A (Sec16a) (Mus musculus (Mouse)).